The sequence spans 2599 residues: Non-reducing polyketide synthase azaA (2599 aa).

The N-terminal acylcarrier protein transacylase domain (SAT) stretch occupies residues 95–231 (PNILLSPMVV…AARSISSLQQ (137 aa)). Catalysis depends on Cys132, which acts as the Nucleophile; for transacylase activity. The active-site Proton donor/acceptor; for transacylase activity is His250. Positions 372 to 790 (PNEIAVIGMS…GSNASMVVAQ (419 aa)) constitute a Ketosynthase family 3 (KS3) domain. Active-site for beta-ketoacyl synthase activity residues include Cys539, His674, and His713. Positions 902 to 1193 (FGGQISNYVG…ITSMASRALG (292 aa)) are malonyl-CoA:ACP transacylase (MAT) domain. An N-terminal hotdog fold region spans residues 1282-1413 (PKTLWSLIEA…GKLAFLSGQD (132 aa)). The PKS/mFAS DH domain occupies 1282–1591 (PKTLWSLIEA…YHKVAKASMS (310 aa)). Residues 1310 to 1589 (LVSGHVIANT…INYHKVAKAS (280 aa)) are product template (PT) domain. His1314 acts as the Proton acceptor; for dehydratase activity in catalysis. Residues 1443–1591 (ADDIIQGRNI…YHKVAKASMS (149 aa)) form a C-terminal hotdog fold region. Residue Asp1499 is the Proton donor; for dehydratase activity of the active site. Residues 1601–1652 (EAAPSSSTRAHPTSSSSPRLPGPFVPEDKSQNETQTAGTNAVAKKKSEKSAQ) form a disordered region. Low complexity predominate over residues 1602 to 1619 (AAPSSSTRAHPTSSSSPR). One can recognise a Carrier domain in the interval 1653–1727 (QNVLDKTRAL…GLVEYVQSAV (75 aa)). Residue Ser1687 is modified to O-(pantetheine 4'-phosphoryl)serine. Residues 1749–1779 (NLAASPSSSSSSTNLTEDSSLDPTETTTNIS) form a disordered region. Residues 1750-1766 (LAASPSSSSSSTNLTED) are compositionally biased toward low complexity. Positions 1769–1779 (LDPTETTTNIS) are enriched in polar residues. The segment at 1952-2140 (DSLLNKLSYR…VGYGQVDWTD (189 aa)) is methyltransferase domain. Residues 2222–2467 (ITGATGSLGV…LCWTPVNDVA (246 aa)) form an NADPH-binding (R) domain region.

The cofactor is pantetheine 4'-phosphate.

It participates in secondary metabolite biosynthesis. Non-reducing polyketide synthase; part of the gene cluster that mediates the biosynthesis of azaphilones, a class of fungal metabolites characterized by a highly oxygenated pyrano-quinone bicyclic core and exhibiting a broad range of bioactivities. In the first step, the non-reducing polyketide synthase azaA forms the hexaketide precursor from successive condensations of five malonyl-CoA units, presumably with a simple acetyl-CoA starter unit. The reactive polyketide chain then undergoes a PT-mediated C2-C7 cyclization to afford the aromatic ring and is eventually released as an aldehyde through the R-domain. The putative ketoreductase azaE is proposed to catalyze the reduction of the terminal ketone resulting in the early culture product FK17-P2a. The monooxygenase azaH was demonstrated to be the only enzyme required to convert FK17-P2a to azanigerone E. AzaH first hydroxylates the benzaldehyde intermediate FK17-P2a at C4, which triggers the formation of the pyran-ring to afford azanigerone E. In parallel, the 2,4-dimethylhexanoyl chain is synthesized by the HR-PKS azaB and is proposed to be transferred to the C4-hydroxyl of azanigerone E by the acyltransferase azaD directly from the ACP domain of azaB. Alternatively, the 2,4-dimethyl-hexanoyl chain may be offloaded from the HR-PKS as a carboxylic acid and converted to an acyl-CoA by azaF. The resulting acyl-CoA molecule could then be taken up as a substrate by AzaD to form azanigerone B. To yield the carboxylic acid substituent in azanigerone A, the hydroxypropyl side chain of azanigerone B would need to undergo a C-C oxidative cleavage catalyzed by cytochrome P450 AzaI. AzaI is proposed to act on a vicinal diol that leads to a C-C bond scission either through an alkoxyradical intermediate or a peroxy complex. In the biosynthesis of azanigerone A, azanigerone B first undergoes hydroxylation at C10, possibly catalyzed by one of the two FAD-dependent monooxygenases encoded in the cluster, azaG or azaL, resulting in the vicinal diol azanigerone C. Oxidative cleavage of azanigerone C by azaI would yield the corresponding aldehyde derivative of azanigerone A. Finally, the dehydrogenase azaJ is proposed to convert the aldehyde functional group into the carboxylic acid, completing the conversion from azanigerone B to azanigerone A. Alternatively, the oxidation of aldehyde to carboxylic acid may be catalyzed by the same P450 enzyme azaI via consecutive oxidation or by endogenous alcohol dehydrogenase. In Aspergillus niger (strain ATCC 1015 / CBS 113.46 / FGSC A1144 / LSHB Ac4 / NCTC 3858a / NRRL 328 / USDA 3528.7), this protein is Non-reducing polyketide synthase azaA.